Reading from the N-terminus, the 117-residue chain is Large ribosomal subunit protein bL20 (117 aa).

This sequence belongs to the bacterial ribosomal protein bL20 family.

Its function is as follows. Binds directly to 23S ribosomal RNA and is necessary for the in vitro assembly process of the 50S ribosomal subunit. It is not involved in the protein synthesizing functions of that subunit. This is Large ribosomal subunit protein bL20 from Campylobacter jejuni subsp. jejuni serotype O:2 (strain ATCC 700819 / NCTC 11168).